Reading from the N-terminus, the 238-residue chain is Cysteine-rich venom protein pseudechetoxin-like (238 aa).

Residues 1–19 (MIAFIVLLSLAAVLQQSSG) form the signal peptide. Positions 20 to 28 (TVDFASESS) are excised as a propeptide. One can recognise an SCP domain in the interval 38–164 (VDKHNDLRRS…STKYLYVCQY (127 aa)). 8 cysteine pairs are disulfide-bonded: C75–C153, C92–C165, C148–C162, C184–C191, C187–C196, C200–C233, C209–C227, and C218–C231. Residues 200 to 233 (CKHNDDLSNCKPLAKKSKCQTEWIKSKCPATCFC) enclose the ShKT domain.

The protein belongs to the CRISP family. As to expression, expressed by the venom gland.

The protein localises to the secreted. Blocks olfactory (CNGA2) and retinal (CNGA1) CNG channel currents. Does not affect neither depolarization- nor caffeine-induced contraction of smooth muscle. The polypeptide is Cysteine-rich venom protein pseudechetoxin-like (Oxyuranus microlepidotus (Inland taipan)).